The primary structure comprises 105 residues: Phosphoribosyl-AMP cyclohydrolase (105 aa).

Residue Asp72 participates in Mg(2+) binding. Cys73 serves as a coordination point for Zn(2+). Residues Asp74 and Asp76 each coordinate Mg(2+). Zn(2+)-binding residues include Cys89 and Cys96.

The protein belongs to the PRA-CH family. In terms of assembly, homodimer. Requires Mg(2+) as cofactor. Zn(2+) is required as a cofactor.

It is found in the cytoplasm. It catalyses the reaction 1-(5-phospho-beta-D-ribosyl)-5'-AMP + H2O = 1-(5-phospho-beta-D-ribosyl)-5-[(5-phospho-beta-D-ribosylamino)methylideneamino]imidazole-4-carboxamide. It participates in amino-acid biosynthesis; L-histidine biosynthesis; L-histidine from 5-phospho-alpha-D-ribose 1-diphosphate: step 3/9. Functionally, catalyzes the hydrolysis of the adenine ring of phosphoribosyl-AMP. This is Phosphoribosyl-AMP cyclohydrolase from Listeria monocytogenes serovar 1/2a (strain ATCC BAA-679 / EGD-e).